The chain runs to 368 residues: Glycolate oxidase 2 (368 aa).

Residues 1 to 360 (MALVTNVCEY…TRGHVVTESD (360 aa)) enclose the FMN hydroxy acid dehydrogenase domain. Residues 78 to 80 (PTA), Ser107, 128 to 130 (QLS), and Thr156 contribute to the FMN site. Arg165 contributes to the glyoxylate binding site. Residues Lys231 and Ser253 each coordinate FMN. Glyoxylate contacts are provided by His255 and Arg258. Catalysis depends on His255, which acts as the Proton acceptor. FMN is bound by residues 286–290 (DSGFR) and 309–310 (GR). Positions 366-368 (SRL) match the Microbody targeting signal motif.

Belongs to the FMN-dependent alpha-hydroxy acid dehydrogenase family. In terms of assembly, homotetramer. FMN is required as a cofactor.

The protein resides in the peroxisome. It carries out the reaction glycolate + O2 = glyoxylate + H2O2. It participates in photosynthesis; photorespiration; glycine from 2-phosphoglycolate: step 2/3. Its function is as follows. Catalyzes the oxidation of glycolate to glyoxylate, with a reduction of O2 to H2O2. Is a key enzyme in photorespiration in green plants. The sequence is that of Glycolate oxidase 2 (GLO2) from Oryza sativa subsp. indica (Rice).